The chain runs to 214 residues: Small ribosomal subunit protein eS6 (214 aa).

This sequence belongs to the eukaryotic ribosomal protein eS6 family.

In Saccharolobus islandicus (strain L.S.2.15 / Lassen #1) (Sulfolobus islandicus), this protein is Small ribosomal subunit protein eS6.